A 61-amino-acid polypeptide reads, in one-letter code: Large ribosomal subunit protein eL37 (61 aa).

Cysteine 19, cysteine 22, cysteine 34, and cysteine 37 together coordinate Zn(2+). Residues cysteine 19–cysteine 37 form a C4-type zinc finger.

This sequence belongs to the eukaryotic ribosomal protein eL37 family. Zn(2+) serves as cofactor.

Binds to the 23S rRNA. In Saccharolobus solfataricus (strain ATCC 35092 / DSM 1617 / JCM 11322 / P2) (Sulfolobus solfataricus), this protein is Large ribosomal subunit protein eL37 (rpl37e).